The chain runs to 386 residues: Manganese dependent endoglucanase Eg5A (386 aa).

The N-terminal stretch at Met1 to Ala17 is a signal peptide. The region spanning Gln18–Ile53 is the CBM1 domain. The active-site Proton donor is the Glu209. Residue Glu319 is the Nucleophile of the active site. Asn324 carries an N-linked (GlcNAc...) asparagine glycan.

It belongs to the glycosyl hydrolase 5 (cellulase A) family. The cofactor is Mn(2+).

It localises to the secreted. The catalysed reaction is Endohydrolysis of (1-&gt;4)-beta-D-glucosidic linkages in cellulose, lichenin and cereal beta-D-glucans.. Secreted manganese dependent endoglucanase that acts by cleaving the beta-1,4-glucose linkage. Exhibits high activity toward carboxymethyl-cellulose (CMC), barley glucan, and glucomannan. Displays low activity on larminarin and xyloglucan but does not hydrolyze hemicellulose substrates such as birchwood xylan, arabinoxylan, and arabinan. This Phanerodontia chrysosporium (White-rot fungus) protein is Manganese dependent endoglucanase Eg5A.